A 139-amino-acid polypeptide reads, in one-letter code: Putative nickel-responsive regulator (139 aa).

Histidine 79, histidine 90, histidine 92, and cysteine 98 together coordinate Ni(2+).

The protein belongs to the transcriptional regulatory CopG/NikR family. Ni(2+) is required as a cofactor.

Its function is as follows. Transcriptional regulator. The chain is Putative nickel-responsive regulator from Lawsonia intracellularis (strain PHE/MN1-00).